We begin with the raw amino-acid sequence, 1004 residues long: MAKQEQAPDRANDVFALTSFLYGGNADYIEELYAKYEDDPNSVDPQWRDFFAKLGDNADDVKKNAEGPSWTRKNWPIAANGELVSALDGNWAEVEKHVTDKLKGKAAKGEAKGAAGTPLTAEEITQAARDSVRAIMMIRAYRMRGHLHANLDPLGLAEKPNDYNELEPENYGFTPADYNRKIFIDNVLGLEYATVPEMLDILKRTYCGAIGVEFMHISDPAEKAWIQERIEGPDKKVAFTPEGKKAILSKLIEAEGFEQFIDVKYKGTKRFGLDGGESLIPALEQIVKRGGQMGLKEVVLGMAHRGRLNVLSQVMGKPHRAIFHEFKGGSYTPDDVEGSGDVKYHLGASSDREFDGNKVHLSLTANPSHLEIVNPVVMGKARAKQDLLVGRTRDDMVPLSERAKVLPLLLHGDAAFAGQGVVAECLGLSGLKGHRVAGTLHFIINNQIGFTTNPAFSRSSPYPSDVAKMIEAPIFHVNGDDPEAVVFAAKVATEFRMTFHKPVVIDMFCYRRFGHNEGDEPSFTQPLMYKAIRAHKTTVQLYGEKLIAEGLVTQDDIDRMKADWRQKLEGEFEAGQSYKPNKADWLDGAWAGLRTADNADEQRRGKTAVPVKTLKEIGKKLVEVPKDFHVHRTIQRFLDNRAKMMETGEGIDWATAESLAFGSLAVEGHPIRLSGQDVERGTFSQRHTVLYDQENQNRYIPLNNLQKGQAIYEAINSMLSEEAVLGYEYGYSLSDPRALVLWEAQFGDFANGAQVVFDQFISSGERKWLRMSGLVCLLPHGFEGQGPEHSSARLERYLQLCAEDNMQVANVTTPANYFHILRRQMKRDFRKPLIMMTPKSLLRHKRAISTLAELSGESSFHRLLWDDARYNKDKGIKLQKDAKIRRVVLCSGKVYYDLYEEREKRGIDDVYLLRVEQLYPFPAKALINELSRFRHAEMVWCQEEPKNMGAWSFIDPYLEWVLAHIDAKHQRVRYAGRPAAASPATGLMSKHLAQLAAFLEDALG.

This sequence belongs to the alpha-ketoglutarate dehydrogenase family. Homodimer. Part of the 2-oxoglutarate dehydrogenase (OGDH) complex composed of E1 (2-oxoglutarate dehydrogenase), E2 (dihydrolipoamide succinyltransferase) and E3 (dihydrolipoamide dehydrogenase); the complex contains multiple copies of the three enzymatic components (E1, E2 and E3). Thiamine diphosphate serves as cofactor.

It carries out the reaction N(6)-[(R)-lipoyl]-L-lysyl-[protein] + 2-oxoglutarate + H(+) = N(6)-[(R)-S(8)-succinyldihydrolipoyl]-L-lysyl-[protein] + CO2. E1 component of the 2-oxoglutarate dehydrogenase (OGDH) complex which catalyzes the decarboxylation of 2-oxoglutarate, the first step in the conversion of 2-oxoglutarate to succinyl-CoA and CO(2). The protein is 2-oxoglutarate dehydrogenase E1 component of Brucella abortus (strain S19).